A 131-amino-acid chain; its full sequence is Large ribosomal subunit protein bL17 (131 aa).

This sequence belongs to the bacterial ribosomal protein bL17 family. Part of the 50S ribosomal subunit. Contacts protein L32.

This Bordetella petrii (strain ATCC BAA-461 / DSM 12804 / CCUG 43448) protein is Large ribosomal subunit protein bL17.